The following is a 206-amino-acid chain: Large ribosomal subunit protein uL4 (206 aa).

Residues 43–78 (ARSGNRAQKDREQVKHTTKKPWRQKGTGRARAGMSS) form a disordered region. Residues 58–70 (HTTKKPWRQKGTG) show a composition bias toward basic residues.

Belongs to the universal ribosomal protein uL4 family. In terms of assembly, part of the 50S ribosomal subunit.

Its function is as follows. One of the primary rRNA binding proteins, this protein initially binds near the 5'-end of the 23S rRNA. It is important during the early stages of 50S assembly. It makes multiple contacts with different domains of the 23S rRNA in the assembled 50S subunit and ribosome. Functionally, forms part of the polypeptide exit tunnel. The chain is Large ribosomal subunit protein uL4 from Polynucleobacter necessarius subsp. necessarius (strain STIR1).